Consider the following 176-residue polypeptide: Putative ribosomal protein eS10-like (176 aa).

The disordered stretch occupies residues 104-176 (TLHRSRPETG…CGRGRGQPPQ (73 aa)). Residues 108–139 (SRPETGRPRPKGLEGKRPARLTRREADRDTYR) are compositionally biased toward basic and acidic residues.

It belongs to the eukaryotic ribosomal protein eS10 family.

The polypeptide is Putative ribosomal protein eS10-like (RPS10P5) (Homo sapiens (Human)).